Consider the following 2377-residue polypeptide: Serine/threonine-protein kinase WNK1 (2377 aa).

Disordered stretches follow at residues Met1–Arg79 and Leu93–Asp203. Residues Thr17 and Thr58 each carry the phosphothreonine modification. Over residues Arg48 to Arg64 the composition is skewed to basic and acidic residues. 2 stretches are compositionally biased toward low complexity: residues Pro101–Gln111 and Val127–Pro141. Positions Ser149–Thr158 are enriched in polar residues. Phosphoserine occurs at positions 165 and 172. The Protein kinase domain maps to Leu221–Phe479. ATP is bound at residue Ser231. Residues Phe283 and Leu299 each coordinate chloride. ATP-binding positions include Thr301 to Met304 and Lys351. Asp368 serves as the catalytic Proton acceptor. Chloride contacts are provided by Leu369 and Leu371. Residues Ser378 and Ser382 each carry the phosphoserine; by autocatalysis modification. The segment at Glu488–Ala555 is autoinhibitory domain. The span at Gln573 to Ser588 shows a compositional bias: basic and acidic residues. Disordered stretches follow at residues Gln573 to Thr782 and Pro1013 to Lys1114. Polar residues-rich tracts occupy residues Asn593–Val628, His638–Pro705, and Ser713–Ser733. Residues Glu629 to Gln639 are interaction with KLHL3. Residues Gln734–Pro746 are compositionally biased toward low complexity. Polar residues predominate over residues Thr747–Thr782. Low complexity predominate over residues Thr1018–Gln1028. Over residues Ala1029–Ser1038 the composition is skewed to polar residues. Residues Pro1042–Pro1058 are compositionally biased toward low complexity. Residues Ser1075–Ser1085 are compositionally biased toward polar residues. Positions Thr1093–Lys1114 are enriched in basic residues. Positions Arg1252–Val1255 match the RFXV motif 1 motif. A Phosphoserine modification is found at Ser1256. 2 disordered regions span residues Gly1726–Pro1760 and Thr1818–Ala1847. Residues Pro1738–Gly1748 show a composition bias toward low complexity. Thr1843 is subject to Phosphothreonine. An RFXV motif 2 motif is present at residues Arg1854–Val1857. Positions Thr1860–Thr1945 are disordered. Residues Asp1863–His1879 are compositionally biased toward basic and acidic residues. A compositionally biased stretch (low complexity) spans Ser1882–Val1900. 2 consecutive short sequence motifs (RFXV motif) follow at residues Arg1940–Val1943 and Arg1952–Val1955. Positions Glu1959–Gly1969 are enriched in basic and acidic residues. Disordered regions lie at residues Glu1959–Ile1984, Pro1989–Asp2008, Ser2015–Asp2064, Val2107–Ser2191, and Ser2203–Gly2239. Ser1973 bears the Phosphoserine mark. Basic and acidic residues predominate over residues Pro1989–Glu1998. Phosphoserine occurs at positions 2006, 2007, 2022, 2024, and 2027. Low complexity predominate over residues Ser2035–Asp2057. The residue at position 2116 (Ser2116) is a Phosphoserine. A compositionally biased stretch (basic residues) spans Gly2117–Lys2129. The segment covering Ser2130–Ser2140 has biased composition (low complexity). The span at Pro2141–Ser2191 shows a compositional bias: polar residues. Over residues Gly2208–Ala2232 the composition is skewed to low complexity. The amphipathic alpha-helix stretch occupies residues Ser2236–Ala2256. Residues Ser2265 and Ser2281 each carry the phosphoserine modification. The interval Pro2325 to Gly2344 is disordered. Phosphoserine is present on residues Ser2365 and Ser2367.

Belongs to the protein kinase superfamily. Ser/Thr protein kinase family. WNK subfamily. As to quaternary structure, interacts with WNK3. Interacts with WNK4; inhibiting the activity of WNK4. Interacts with SGK1; promoting its activation. Associates with the mTORC2 complex. Interacts with UVRAG. Interacts with isoform 1; inhibiting isoform 1 activity. Mg(2+) is required as a cofactor. In terms of processing, autophosphorylated at Ser-378 and Ser-382, promoting its activity. Autophosphorylation at Ser-382 is inhibited by intracellular calcium. Phosphorylation at Thr-58 increases ability to activate SGK1. Post-translationally, ubiquitinated by the BCR(KLHL3) complex, leading to its degradation. Also ubiquitinated by the BCR(KLHL2) complex. May be O-glycosylated. As to expression, widely expressed in both adult and embryonic tissue, with highest levels observed in the testis and lower levels in heart, lung, kidney, placenta, brain and skeletal muscle. Expressed in pancreatic duct. Two isoforms are expressed in heart, a single shorter isoform in the kidney. Locates to the distal convoluted tubule, the medullary collecting duct and the cortical collecting duct of the kidney. Restricted to the nervous system, expressed preferentially in sensory neurons than in motor neurons and in general more abundant in axons than in cell bodies (at protein level). In the DRG, predominantly expressed in the satellite cells that envelop sensory neurons, but low expression also observed in the cell bodies of neurons (at protein level). In the sciatic nerve, expressed in the Schwann cells that surround axons and in a mosaic distribution of axons (at protein level). In the spinal cord, expressed in superficial layers (LI and LII), as well as in the fibers of the Lissauer tract (at protein level). Also detected in the axon fibers of dorsolateral funiculus and lateral funiculus (at protein level).

The protein resides in the cytoplasm. Its subcellular location is the nucleus. It is found in the cytoskeleton. The protein localises to the spindle. The enzyme catalyses L-seryl-[protein] + ATP = O-phospho-L-seryl-[protein] + ADP + H(+). It carries out the reaction L-threonyl-[protein] + ATP = O-phospho-L-threonyl-[protein] + ADP + H(+). Activated in response to hyperosmotic stress: cell shrinkage promotes formation of a membraneless compartment that concentrates WNK1 with its substrates, OXSR1/OSR1 and STK39/SPAK. Activation requires autophosphorylation of Ser-382 and, to a lower extent, Ser-378. Autophosphorylation and subsequent activation is inhibited by increases in intracellular ionic strength: Cl(-) potently inhibits WNK1 kinase activity via direct binding. Also inhibited by K(+) ions. Its function is as follows. Serine/threonine-protein kinase component of the WNK1-SPAK/OSR1 kinase cascade, which acts as a key regulator of blood pressure and regulatory volume increase by promoting ion influx. WNK1 mediates regulatory volume increase in response to hyperosmotic stress by acting as a molecular crowding sensor, which senses cell shrinkage and mediates formation of a membraneless compartment by undergoing liquid-liquid phase separation. The membraneless compartment concentrates WNK1 with its substrates, OXSR1/OSR1 and STK39/SPAK, promoting WNK1-dependent phosphorylation and activation of downstream kinases OXSR1/OSR1 and STK39/SPAK. Following activation, OXSR1/OSR1 and STK39/SPAK catalyze phosphorylation of ion cotransporters SLC12A1/NKCC2, SLC12A2/NKCC1, SLC12A5/KCC2 and SLC12A6/KCC3, regulating their activity. Phosphorylation of Na-K-Cl cotransporters SLC12A2/NKCC1 and SLC12A2/NKCC1 promote their activation and ion influx; simultaneously, phosphorylation of K-Cl cotransporters SLC12A5/KCC2 and SLC12A6/KCC3 inhibit their activity, blocking ion efflux. Also acts as a regulator of angiogenesis in endothelial cells. Also acts independently of the WNK1-SPAK/OSR1 kinase cascade by catalyzing phosphorylation of other substrates, such as SYT2, PCF11 and NEDD4L. Mediates phosphorylation of SYT2, regulating SYT2 association with phospholipids and membrane-binding. Regulates mRNA export in the nucleus by mediating phosphorylation of PCF11, thereby decreasing the association between PCF11 and POLR2A/RNA polymerase II and promoting mRNA export to the cytoplasm. Acts as a negative regulator of autophagy. Required for the abscission step during mitosis, independently of the WNK1-SPAK/OSR1 kinase cascade. WNK1 may also play a role in actin cytoskeletal reorganization. Also acts as a scaffold protein independently of its protein kinase activity: negatively regulates cell membrane localization of various transporters and channels, such as SLC4A4, SLC26A6, SLC26A9, TRPV4 and CFTR. Involved in the regulation of epithelial Na(+) channel (ENaC) by promoting activation of SGK1 in a kinase-independent manner: probably acts as a scaffold protein that promotes the recruitment of SGK1 to the mTORC2 complex in response to chloride, leading to mTORC2-dependent phosphorylation and activation of SGK1. Acts as an assembly factor for the ER membrane protein complex independently of its protein kinase activity: associates with EMC2 in the cytoplasm via its amphipathic alpha-helix, and prevents EMC2 ubiquitination and subsequent degradation, thereby promoting EMC2 stabilization. Functionally, kinase-defective isoform specifically expressed in kidney, which acts as a dominant-negative regulator of the longer isoform 1. Does not directly inhibit WNK4 and has no direct effect on sodium and chloride ion transport. Down-regulates sodium-chloride cotransporter activity indirectly by inhibiting isoform 1, it associates with isoform 1 and attenuates its kinase activity. In kidney, may play an important role regulating sodium and potassium balance. In Mus musculus (Mouse), this protein is Serine/threonine-protein kinase WNK1.